The chain runs to 555 residues: B3 domain-containing protein REM10 (555 aa).

4 DNA-binding regions (TF-B3) span residues 11 to 103, 150 to 247, 276 to 372, and 460 to 554; these read NPQF…LGPS, CFVA…FPMT, SFVA…LPLN, and SQNR…FCSK.

Its subcellular location is the nucleus. In Arabidopsis thaliana (Mouse-ear cress), this protein is B3 domain-containing protein REM10 (REM10).